Consider the following 614-residue polypeptide: Vitamin B12 transporter BtuB (614 aa).

The N-terminal stretch at 1 to 20 (MIKKASLLTACSVTAFSAWA) is a signal peptide. A TonB box motif is present at residues 26 to 33 (DTLVVTAI). In terms of domain architecture, TBDR plug spans 38–152 (PRSTVLAPTT…IGGVVNIITT (115 aa)). Residues Leu-83, Ser-85, Asn-92, and 110–111 (VS) contribute to the cyanocob(III)alamin site. Residues 155-614 (EPGTEISAGW…EYTLSGSYTF (460 aa)) enclose the TBDR beta-barrel domain. The next 3 beta stranded transmembrane spans lie at 158-165 (TEISAGWG), 169-178 (YQNYDVSTQQ), and 184-195 (TRVTLLGDYAHT). 4 residues coordinate Ca(2+): Asp-199, Gln-211, Asp-213, and Asp-215. 2 beta stranded membrane-spanning segments follow: residues 217-227 (FLSKTLYGALE) and 232-248 (DAWS…NRTN). The Ca(2+) site is built by Tyr-249 and Asp-250. Ala-251 lines the cyanocob(III)alamin pocket. Residue Asp-261 coordinates Ca(2+). Transmembrane regions (beta stranded) follow at residues 263–277 (RKLY…LRYN), 279–296 (ELIK…KDYN), 309–325 (TLDE…NNVI), 328–337 (HGSIGAGVDW), 353–369 (YDQR…QQVG), 371–381 (FTFEGAARSDD), 385–400 (FGRH…WEFI), 403–417 (YRFI…KAPN), 434–443 (KSKQWEGAFE), 449–458 (VNWRISGYRN), 473–490 (YYNE…TANF), 494–509 (PLTH…ARNA), 517–529 (RRAK…QLDW), and 535–550 (DWGI…YDKD). Thr-309 provides a ligand contact to cyanocob(III)alamin. Arg-517 lines the cyanocob(III)alamin pocket. Tyr-551 is a cyanocob(III)alamin binding site. The next 3 membrane-spanning stretches (beta stranded) occupy residues 558-572 (TVKM…LAVA), 585-596 (IANLFDKDYETV), and 602-614 (AGRE…SYTF). A TonB C-terminal box motif is present at residues 597-614 (YGYQTAGREYTLSGSYTF).

Belongs to the TonB-dependent receptor family. BtuB (TC 1.B.14.3.1) subfamily.

The protein resides in the cell outer membrane. Functionally, involved in the active translocation of vitamin B12 (cyanocobalamin) across the outer membrane to the periplasmic space. It derives its energy for transport by interacting with the trans-periplasmic membrane protein TonB. This is Vitamin B12 transporter BtuB from Shigella flexneri serotype 5b (strain 8401).